The chain runs to 430 residues: Leucoanthocyanidin dioxygenase (430 aa).

Positions 212–311 (LLLQMKINYY…RFSWAIFCEP (100 aa)) constitute a Fe2OG dioxygenase domain. Fe cation-binding residues include His-236, Asp-238, and His-292. 2 stretches are compositionally biased toward basic and acidic residues: residues 376–407 (KKDN…KEDG) and 415–430 (KVFK…EESK). Residues 376-430 (KKDNQDAVAENKDIKEDEQCGPAEHKDIKEDGQGAAAENKVFKENNQDVAAEESK) are disordered.

Belongs to the iron/ascorbate-dependent oxidoreductase family. The cofactor is Fe cation. L-ascorbate serves as cofactor. Predominantly expressed in corollas and at lower levels in anthers.

It catalyses the reaction a (2R,3S,4S)-leucoanthocyanidin + 2-oxoglutarate + O2 = a 4-H-anthocyanidin with a 3-hydroxy group + succinate + CO2 + 2 H2O. The protein operates within pigment biosynthesis; anthocyanin biosynthesis. In terms of biological role, oxidation of leucoanthocyanidins into anthocyanidins. The polypeptide is Leucoanthocyanidin dioxygenase (ANT17) (Petunia hybrida (Petunia)).